A 139-amino-acid polypeptide reads, in one-letter code: Ribosomal RNA large subunit methyltransferase H (139 aa).

Residues L57, G88, and 107–112 each bind S-adenosyl-L-methionine; that span reads LSAMTF.

It belongs to the RNA methyltransferase RlmH family. As to quaternary structure, homodimer.

It localises to the cytoplasm. The enzyme catalyses pseudouridine(1915) in 23S rRNA + S-adenosyl-L-methionine = N(3)-methylpseudouridine(1915) in 23S rRNA + S-adenosyl-L-homocysteine + H(+). Its function is as follows. Specifically methylates the pseudouridine at position 1915 (m3Psi1915) in 23S rRNA. The sequence is that of Ribosomal RNA large subunit methyltransferase H from Solibacter usitatus (strain Ellin6076).